Reading from the N-terminus, the 734-residue chain is Platelet glycoprotein Ib alpha chain (734 aa).

The N-terminal stretch at 1–16 is a signal peptide; sequence MALLILLFLLPSPLHS. The LRRNT domain occupies 17–47; sequence QHTCSISKVTSLLEVNCENKKLTALPADLPA. Over 17–612 the chain is Extracellular; sequence QHTCSISKVT…LNSDFCCFLP (596 aa). The cysteines at positions 20 and 33 are disulfide-linked. LRR repeat units follow at residues 48–69, 72–93, 94–115, 117–140, 141–162, 165–188, and 189–210; these read DTGILHLGENQLGTFSTASLVH, HLTYLYLDRCELTSLQTNGKLI, KLENLDLSHNNLKSLPSLGWAL, ALTTLDVSFNKLGSLSPGVLDGLS, QLQELYLQNNDLKSLPPGLLLP, KLKKLNLANNKLRELPSGLLDGLE, and DLDTLYLQRNWLRTIPKGFFGT. The 62-residue stretch at 221-282 folds into the LRRCT domain; sequence NSWYCDCEIL…YSYPGKGCPT (62 aa). Disulfide bonds link cysteine 225/cysteine 264 and cysteine 227/cysteine 280. Tyrosine 292 carries the sulfotyrosine modification. 4 O-linked (GalNAc...) threonine glycosylation sites follow: threonine 301, threonine 311, threonine 315, and threonine 316. An O-linked (GalNAc...) serine glycan is attached at serine 335. O-linked (GalNAc...) threonine glycosylation is found at threonine 339, threonine 348, threonine 358, and threonine 377. Residue serine 382 is glycosylated (O-linked (GalNAc...) serine). O-linked (GalNAc...) threonine glycans are attached at residues threonine 384, threonine 385, and threonine 405. 2 disordered regions span residues 406–429 and 460–526; these read STLTTPEHSTTPVPTTTILTTPEH and EPST…PEPS. O-linked (GalNAc...) threonine glycosylation is found at threonine 512, threonine 516, threonine 519, threonine 530, threonine 542, threonine 546, threonine 550, and threonine 562. Serine 572 carries O-linked (GalNAc...) serine glycosylation. O-linked (GalNAc...) threonine glycosylation occurs at threonine 573. Residues 613-633 traverse the membrane as a helical segment; that stretch reads LGFYVLGLLWLLFASVVLILL. Over 634–734 the chain is Cytoplasmic; that stretch reads LTWTWHVTPH…VGIRYSGHSL (101 aa). Residues serine 711 and serine 714 each carry the phosphoserine modification.

As to quaternary structure, two GP-Ib beta are disulfide-linked to one GP-Ib alpha. GP-IX is complexed with the GP-Ib heterodimer via a non covalent linkage. Interacts with FLNB. Interacts with FLNA (via filamin repeats 4, 9, 12, 17, 19, 21, and 23). Post-translationally, O-glycosylated. In terms of processing, glycocalicin is the product of a proteolytic cleavage/shedding, catalyzed by ADAM17, which releases most of the extracellular domain. Binding sites for vWF and thrombin are in this part of the protein.

Its subcellular location is the membrane. In terms of biological role, GP-Ib, a surface membrane protein of platelets, participates in the formation of platelet plugs by binding to the A1 domain of vWF, which is already bound to the subendothelium. The polypeptide is Platelet glycoprotein Ib alpha chain (Gp1ba) (Mus musculus (Mouse)).